The chain runs to 448 residues: Endoglucanase (448 aa).

Residues 1-34 form the signal peptide; the sequence is MFSKIKKINFFKKTFSFLIAVVMMLFTVLGTNTY. Substrate contacts are provided by residues His-70, 74 to 75, Tyr-101, and His-137; that span reads WY. The Proton donor role is filled by Glu-175. Tyr-237 serves as a coordination point for substrate. The Nucleophile role is filled by Glu-263. Residues 269 to 270, Trp-297, and 302 to 304 contribute to the substrate site; these read AS and KSE.

Belongs to the glycosyl hydrolase 5 (cellulase A) family.

The catalysed reaction is Endohydrolysis of (1-&gt;4)-beta-D-glucosidic linkages in cellulose, lichenin and cereal beta-D-glucans.. The polypeptide is Endoglucanase (eglA) (Clostridium saccharobutylicum).